The sequence spans 132 residues: Group 2 truncated hemoglobin YjbI (132 aa).

Heme contacts are provided by Thr-45, Lys-48, Tyr-63, and His-76.

Belongs to the truncated hemoglobin family. Group II subfamily. Monomer. Heme serves as cofactor.

Hemoglobin-like protein that exhibits a low peroxidase activity. Its very high oxygen affinity may rule out the possibility that it is involved in oxygen transport. The sequence is that of Group 2 truncated hemoglobin YjbI (yjbI) from Bacillus subtilis (strain 168).